The chain runs to 248 residues: Cytochrome c oxidase subunit 2 (248 aa).

The Mitochondrial intermembrane segment spans residues Met-1–Gln-43. A helical membrane pass occupies residues Val-44–Gly-65. The Mitochondrial matrix segment spans residues Lys-66–Glu-79. Residues Ile-80–Lys-99 form a helical membrane-spanning segment. Topologically, residues Leu-100–Glu-248 are mitochondrial intermembrane. His-180, Cys-215, Glu-217, Cys-219, His-223, and Met-226 together coordinate Cu cation. Mg(2+) is bound at residue Glu-217.

This sequence belongs to the cytochrome c oxidase subunit 2 family. In terms of assembly, component of the cytochrome c oxidase (complex IV, CIV), a multisubunit enzyme composed of a catalytic core of 3 subunits and several supernumerary subunits. The complex exists as a monomer or a dimer and forms supercomplexes (SCs) in the inner mitochondrial membrane with ubiquinol-cytochrome c oxidoreductase (cytochrome b-c1 complex, complex III, CIII). It depends on Cu cation as a cofactor.

It localises to the mitochondrion inner membrane. The enzyme catalyses 4 Fe(II)-[cytochrome c] + O2 + 8 H(+)(in) = 4 Fe(III)-[cytochrome c] + 2 H2O + 4 H(+)(out). Component of the cytochrome c oxidase, the last enzyme in the mitochondrial electron transport chain which drives oxidative phosphorylation. The respiratory chain contains 3 multisubunit complexes succinate dehydrogenase (complex II, CII), ubiquinol-cytochrome c oxidoreductase (cytochrome b-c1 complex, complex III, CIII) and cytochrome c oxidase (complex IV, CIV), that cooperate to transfer electrons derived from NADH and succinate to molecular oxygen, creating an electrochemical gradient over the inner membrane that drives transmembrane transport and the ATP synthase. Cytochrome c oxidase is the component of the respiratory chain that catalyzes the reduction of oxygen to water. Electrons originating from reduced cytochrome c in the intermembrane space (IMS) are transferred via the dinuclear copper A center (CU(A)) of subunit 2 and heme A of subunit 1 to the active site in subunit 1, a binuclear center (BNC) formed by heme A3 and copper B (CU(B)). The BNC reduces molecular oxygen to 2 water molecules using 4 electrons from cytochrome c in the IMS and 4 protons from the mitochondrial matrix. This Metridium senile (Brown sea anemone) protein is Cytochrome c oxidase subunit 2 (COII).